Reading from the N-terminus, the 142-residue chain is HTH-type transcriptional regulator MntR (142 aa).

Residues 1-63 (MPTPSMEDYI…YEKYRGLVLT (63 aa)) form the HTH dtxR-type domain. Mn(2+) contacts are provided by Asp8, Glu11, His77, Glu99, Glu102, and His103.

It belongs to the DtxR/MntR family. In terms of assembly, homodimer.

The protein localises to the cytoplasm. Its activity is regulated as follows. DNA binding is strongly activated by Mn(2+). Functionally, central regulator of manganese homeostasis. The protein is HTH-type transcriptional regulator MntR of Bacillus mycoides (strain KBAB4) (Bacillus weihenstephanensis).